The chain runs to 312 residues: Ribosomal RNA small subunit methyltransferase H (312 aa).

S-adenosyl-L-methionine contacts are provided by residues 35–37, D55, F79, D101, and Q108; that span reads GGH.

It belongs to the methyltransferase superfamily. RsmH family.

It is found in the cytoplasm. The catalysed reaction is cytidine(1402) in 16S rRNA + S-adenosyl-L-methionine = N(4)-methylcytidine(1402) in 16S rRNA + S-adenosyl-L-homocysteine + H(+). Its function is as follows. Specifically methylates the N4 position of cytidine in position 1402 (C1402) of 16S rRNA. This chain is Ribosomal RNA small subunit methyltransferase H, found in Buchnera aphidicola subsp. Schizaphis graminum (strain Sg).